The sequence spans 197 residues: Protein shisa-4 (197 aa).

A signal peptide spans 1-27 (MPPAGPRGTAPLAAVVLLVLGAPLALA). Residues 28-87 (SEDCLWYLDRNGSWHPGFDCEFFTFCCGTCYQRYCCRDLTLLITERQQKHCLAFSPKTIA) lie on the Extracellular side of the membrane. Residues 88–108 (GIASAVILFVAVVATTICCFL) form a helical membrane-spanning segment. Residues 109–197 (CSCCYLYRRR…MPPQPSYPGA (89 aa)) are Cytoplasmic-facing.

It belongs to the shisa family.

The protein resides in the membrane. The protein is Protein shisa-4 (Shisa4) of Mus musculus (Mouse).